Here is a 389-residue protein sequence, read N- to C-terminus: tRNA-specific 2-thiouridylase MnmA (389 aa).

ATP contacts are provided by residues 35 to 42 (GMSGGVDS) and Met-61. The segment at 121–123 (NPD) is interaction with target base in tRNA. Cys-126 serves as the catalytic Nucleophile. Cysteines 126 and 223 form a disulfide. Residue Gly-151 participates in ATP binding. The segment at 173–175 (KDQ) is interaction with tRNA. Residue Cys-223 is the Cysteine persulfide intermediate of the active site. The tract at residues 335 to 336 (RY) is interaction with tRNA.

It belongs to the MnmA/TRMU family.

The protein resides in the cytoplasm. The enzyme catalyses S-sulfanyl-L-cysteinyl-[protein] + uridine(34) in tRNA + AH2 + ATP = 2-thiouridine(34) in tRNA + L-cysteinyl-[protein] + A + AMP + diphosphate + H(+). In terms of biological role, catalyzes the 2-thiolation of uridine at the wobble position (U34) of tRNA, leading to the formation of s(2)U34. This Mannheimia succiniciproducens (strain KCTC 0769BP / MBEL55E) protein is tRNA-specific 2-thiouridylase MnmA.